The primary structure comprises 311 residues: Olfactory receptor 2M4 (311 aa).

Residues 1-25 lie on the Extracellular side of the membrane; it reads MVWENQTFNSIFILLGIFNHSPTHT. An N-linked (GlcNAc...) asparagine glycan is attached at Asn5. Residues 26-49 traverse the membrane as a helical segment; sequence FLFSLVLGIFSLALMENISMVLLI. At 50–57 the chain is on the cytoplasmic side; sequence YIEKQLHT. A helical membrane pass occupies residues 58-79; it reads PMYFLLSQLSLMDLMLICTTLP. The Extracellular segment spans residues 80-100; it reads KMIFSYLSGKKSISLAGCGTQ. Cys97 and Cys189 are disulfide-bonded. A helical transmembrane segment spans residues 101 to 120; the sequence is IFFYVSLLGAECFLLAVMAY. At 121–139 the chain is on the cytoplasmic side; it reads DRYVAICHPLQYTILMNPK. Residues 140 to 158 form a helical membrane-spanning segment; the sequence is LCVFMTVASWTLGSLDGII. Residues 159-195 are Extracellular-facing; sequence VLAAVLSFSYCSSLEIHHFFCDVAALLPLSCTETSAF. A helical transmembrane segment spans residues 196 to 219; sequence ERLLVICCVVMLIFPVSVIILSYS. Over 220–236 the chain is Cytoplasmic; sequence HVLRAVIHMGSGESRRK. A helical membrane pass occupies residues 237 to 259; the sequence is AFTTCSSHLSVVGLYYGAAMFMY. Over 260–272 the chain is Extracellular; sequence MRPASKHTPDQDK. A helical membrane pass occupies residues 273–292; that stretch reads MVSAFYTILTPMLNPLIYSL. Over 293 to 311 the chain is Cytoplasmic; sequence RNKEVFRALQKVLKKRKLI.

This sequence belongs to the G-protein coupled receptor 1 family.

The protein resides in the cell membrane. In terms of biological role, odorant receptor. The sequence is that of Olfactory receptor 2M4 (OR2M4) from Homo sapiens (Human).